The following is a 475-amino-acid chain: Sulfate adenylyltransferase subunit 1 (475 aa).

Positions 25–239 (KSLLRFLTCG…EVLETVEIQR (215 aa)) constitute a tr-type G domain. Residues 34–41 (GSVDDGKS) are G1. 34–41 (GSVDDGKS) contacts GTP. Residues 92 to 96 (GITID) are G2. Residues 113-116 (DTPG) are G3. Residues 113 to 117 (DTPGH) and 168 to 171 (NKMD) each bind GTP. Residues 168 to 171 (NKMD) are G4. Positions 206 to 208 (SAL) are G5.

It belongs to the TRAFAC class translation factor GTPase superfamily. Classic translation factor GTPase family. CysN/NodQ subfamily. As to quaternary structure, heterodimer composed of CysD, the smaller subunit, and CysN.

The catalysed reaction is sulfate + ATP + H(+) = adenosine 5'-phosphosulfate + diphosphate. It functions in the pathway sulfur metabolism; hydrogen sulfide biosynthesis; sulfite from sulfate: step 1/3. Its function is as follows. With CysD forms the ATP sulfurylase (ATPS) that catalyzes the adenylation of sulfate producing adenosine 5'-phosphosulfate (APS) and diphosphate, the first enzymatic step in sulfur assimilation pathway. APS synthesis involves the formation of a high-energy phosphoric-sulfuric acid anhydride bond driven by GTP hydrolysis by CysN coupled to ATP hydrolysis by CysD. The chain is Sulfate adenylyltransferase subunit 1 from Escherichia coli (strain SE11).